Consider the following 182-residue polypeptide: MAAEEKDPLSYFAAYGSSSSGSSDEEDNIEPEETSRRTPDPAKSAGGCRNKAEKRLPGPDELFRSVTRPAFLYNPLNKQIDWERHVVKAPEEPPKEFKIWKSNYVPPPETYTTEKKPPPPELDMAIKWSNIYEDNGDDAPQNAKKARLLPEGEETLESDDEKDEHTSKKRKVEPGEPAKKKK.

Disordered stretches follow at residues 1 to 67 (MAAE…RSVT) and 100 to 182 (WKSN…KKKK). Residues 23–32 (SDEEDNIEPE) are compositionally biased toward acidic residues. A compositionally biased stretch (basic and acidic residues) spans 50-63 (NKAEKRLPGPDELF). A Phosphothreonine modification is found at Thr67. Tyr132 is modified (phosphotyrosine). The span at 151–162 (EGEETLESDDEK) shows a compositional bias: acidic residues. Residue Ser158 is modified to Phosphoserine. Positions 172-182 (VEPGEPAKKKK) are enriched in basic and acidic residues.

It belongs to the UPF0690 family. Expressed in all tissues tested including heart, placenta, liver, skeletal muscle, kidney and pancreas. Weak expression in brain and lung.

The sequence is that of UPF0690 protein C1orf52 (C1orf52) from Homo sapiens (Human).